A 218-amino-acid polypeptide reads, in one-letter code: Glutathione S-transferase class-mu 26 kDa isozyme (218 aa).

Positions 1 to 83 constitute a GST N-terminal domain; that stretch reads MAPKFGYWKV…YIADKHNMLG (83 aa). Residues 7 to 8, 41 to 45, 54 to 55, and 67 to 68 contribute to the glutathione site; these read YW, WSNDK, NL, and QS. Positions 85 to 203 constitute a GST C-terminal domain; the sequence is CPKERAEISM…NSSRYIKWPL (119 aa). Substrate is bound at residue tyrosine 111.

It belongs to the GST superfamily. Mu family. As to quaternary structure, homodimer. Tegument and in subtegumentary parenchymal cells. GST 26 may be actively excreted by adult worms.

It carries out the reaction RX + glutathione = an S-substituted glutathione + a halide anion + H(+). Conjugation of reduced glutathione to a wide number of exogenous and endogenous hydrophobic electrophiles. Functionally, GST isoenzymes appear to play a central role in the parasite detoxification system. Other functions are also suspected including a role in increasing the solubility of haematin in the parasite gut. The sequence is that of Glutathione S-transferase class-mu 26 kDa isozyme from Schistosoma mansoni (Blood fluke).